The primary structure comprises 147 residues: Gastrula-specific protein 17 (147 aa).

The tract at residues 1-119 is disordered; sequence MSQNLDFLAL…TQVYGNHQPG (119 aa). 3 stretches are compositionally biased toward polar residues: residues 20-36, 45-57, and 74-88; these read SPTS…STPP, RQIS…YTNP, and LLQN…SPTA.

This is Gastrula-specific protein 17 (gs17) from Xenopus laevis (African clawed frog).